A 1171-amino-acid chain; its full sequence is ATP-dependent helicase/deoxyribonuclease subunit B (1171 aa).

One can recognise a UvrD-like helicase ATP-binding domain in the interval 1-343 (MSLRFVIGRA…LVADENYRYR (343 aa)). An ATP-binding site is contributed by 8 to 15 (GRAGSGKS). Positions 281–587 (MEQPRFHSPA…QFANIPPSLD (307 aa)) constitute a UvrD-like helicase C-terminal domain. [4Fe-4S] cluster is bound by residues C805, C1129, C1132, and C1138.

It belongs to the helicase family. AddB/RexB type 1 subfamily. As to quaternary structure, heterodimer of AddA and AddB. It depends on Mg(2+) as a cofactor. The cofactor is [4Fe-4S] cluster.

Functionally, the heterodimer acts as both an ATP-dependent DNA helicase and an ATP-dependent, dual-direction single-stranded exonuclease. Recognizes the chi site generating a DNA molecule suitable for the initiation of homologous recombination. The AddB subunit has 5' -&gt; 3' nuclease activity but not helicase activity. The protein is ATP-dependent helicase/deoxyribonuclease subunit B of Bacillus cereus (strain AH187).